The following is a 604-amino-acid chain: Elongation factor 4 (604 aa).

A tr-type G domain is found at 7–189 (SRLRNFCIIA…AVVDRIPPPA (183 aa)). GTP contacts are provided by residues 19 to 24 (DHGKST) and 136 to 139 (NKID).

Belongs to the TRAFAC class translation factor GTPase superfamily. Classic translation factor GTPase family. LepA subfamily.

It is found in the cell inner membrane. The catalysed reaction is GTP + H2O = GDP + phosphate + H(+). Its function is as follows. Required for accurate and efficient protein synthesis under certain stress conditions. May act as a fidelity factor of the translation reaction, by catalyzing a one-codon backward translocation of tRNAs on improperly translocated ribosomes. Back-translocation proceeds from a post-translocation (POST) complex to a pre-translocation (PRE) complex, thus giving elongation factor G a second chance to translocate the tRNAs correctly. Binds to ribosomes in a GTP-dependent manner. This chain is Elongation factor 4, found in Prochlorococcus marinus (strain MIT 9303).